A 233-amino-acid polypeptide reads, in one-letter code: Demethylmenaquinone methyltransferase (233 aa).

Residues threonine 58, aspartate 79, and 106-107 each bind S-adenosyl-L-methionine; that span reads NA.

This sequence belongs to the class I-like SAM-binding methyltransferase superfamily. MenG/UbiE family.

It carries out the reaction a 2-demethylmenaquinol + S-adenosyl-L-methionine = a menaquinol + S-adenosyl-L-homocysteine + H(+). It participates in quinol/quinone metabolism; menaquinone biosynthesis; menaquinol from 1,4-dihydroxy-2-naphthoate: step 2/2. In terms of biological role, methyltransferase required for the conversion of demethylmenaquinol (DMKH2) to menaquinol (MKH2). The sequence is that of Demethylmenaquinone methyltransferase from Bacillus subtilis (strain 168).